Here is a 72-residue protein sequence, read N- to C-terminus: SRY-related protein AES4 (72 aa).

Residues valine 1–lysine 69 constitute a DNA-binding region (HMG box).

The protein resides in the nucleus. This chain is SRY-related protein AES4, found in Alligator mississippiensis (American alligator).